The following is a 294-amino-acid chain: ATP phosphoribosyltransferase (294 aa).

The protein belongs to the ATP phosphoribosyltransferase family. Long subfamily. The cofactor is Mg(2+).

The protein resides in the cytoplasm. The catalysed reaction is 1-(5-phospho-beta-D-ribosyl)-ATP + diphosphate = 5-phospho-alpha-D-ribose 1-diphosphate + ATP. The protein operates within amino-acid biosynthesis; L-histidine biosynthesis; L-histidine from 5-phospho-alpha-D-ribose 1-diphosphate: step 1/9. With respect to regulation, feedback inhibited by histidine. Catalyzes the condensation of ATP and 5-phosphoribose 1-diphosphate to form N'-(5'-phosphoribosyl)-ATP (PR-ATP). Has a crucial role in the pathway because the rate of histidine biosynthesis seems to be controlled primarily by regulation of HisG enzymatic activity. This Chlorobium luteolum (strain DSM 273 / BCRC 81028 / 2530) (Pelodictyon luteolum) protein is ATP phosphoribosyltransferase.